The following is a 194-amino-acid chain: Imidazoleglycerol-phosphate dehydratase (194 aa).

Belongs to the imidazoleglycerol-phosphate dehydratase family.

It localises to the cytoplasm. It catalyses the reaction D-erythro-1-(imidazol-4-yl)glycerol 3-phosphate = 3-(imidazol-4-yl)-2-oxopropyl phosphate + H2O. Its pathway is amino-acid biosynthesis; L-histidine biosynthesis; L-histidine from 5-phospho-alpha-D-ribose 1-diphosphate: step 6/9. The protein is Imidazoleglycerol-phosphate dehydratase of Streptococcus thermophilus (strain ATCC BAA-491 / LMD-9).